A 98-amino-acid polypeptide reads, in one-letter code: C-X-C motif chemokine 10 (98 aa).

The N-terminal stretch at 1 to 21 is a signal peptide; sequence MNQTAILICCLVFLTLSGIQG. Residue R26 is modified to Citrulline. 2 disulfide bridges follow: C30–C57 and C32–C74.

This sequence belongs to the intercrine alpha (chemokine CxC) family.

It localises to the secreted. Functionally, chemotactic for monocytes and T-lymphocytes. Binds to CXCR3. The chain is C-X-C motif chemokine 10 (CXCL10) from Macaca mulatta (Rhesus macaque).